The chain runs to 111 residues: UPF0060 membrane protein XCC2880 (111 aa).

The next 4 helical transmembrane spans lie at 8–28 (LLLFVATAVAELVGCYLPYLW), 34–54 (SVWLLLPAALSLAVFVWLLTL), 62–82 (VYAAYGGVYIATALLWLWWVD), and 91–111 (LLGAGCCLLGMAIIMFSPRSG).

The protein belongs to the UPF0060 family.

It localises to the cell inner membrane. In Xanthomonas campestris pv. campestris (strain ATCC 33913 / DSM 3586 / NCPPB 528 / LMG 568 / P 25), this protein is UPF0060 membrane protein XCC2880.